The following is a 324-amino-acid chain: IDS-like terpene synthase 3 (324 aa).

Residues D77 and D81 each contribute to the Mg(2+) site.

The protein belongs to the FPP/GGPP synthase family. It depends on Mg(2+) as a cofactor.

The enzyme catalyses (2E)-geranyl diphosphate + H2O = linalool + diphosphate. It catalyses the reaction (2E,6E)-farnesyl diphosphate + H2O = (6E)-nerolidol + diphosphate. Functionally, terpene synthase that shows monoterpene synthase activity and produces linalool, using geranyl diphosphate (GPP) as substrate. Also shows sesquiterpene synthase activity as it is able to convert farnesyl diphosphate (FPP) into (E)-nerolidol. This is IDS-like terpene synthase 3 from Melampsora lini (Rust fungus).